The following is a 542-amino-acid chain: CTP synthase (542 aa).

An amidoligase domain region spans residues 1–265 (MARYVFITGG…DNEVLAAFGI (265 aa)). Residue Ser13 participates in CTP binding. Position 13 (Ser13) interacts with UTP. ATP contacts are provided by residues 14-19 (SLGKGI) and Asp71. Mg(2+)-binding residues include Asp71 and Glu139. CTP-binding positions include 146 to 148 (DIE), 186 to 191 (KTKPTQ), and Lys222. UTP contacts are provided by residues 186-191 (KTKPTQ) and Lys222. The region spanning 291-541 (TIAIVGKYTG…IEAALEQSRL (251 aa)) is the Glutamine amidotransferase type-1 domain. L-glutamine is bound at residue Gly353. Residue Cys380 is the Nucleophile; for glutamine hydrolysis of the active site. L-glutamine is bound by residues 381 to 384 (FGMQ), Glu404, and Arg469. Catalysis depends on residues His514 and Glu516.

Belongs to the CTP synthase family. As to quaternary structure, homotetramer.

It carries out the reaction UTP + L-glutamine + ATP + H2O = CTP + L-glutamate + ADP + phosphate + 2 H(+). The enzyme catalyses L-glutamine + H2O = L-glutamate + NH4(+). It catalyses the reaction UTP + NH4(+) + ATP = CTP + ADP + phosphate + 2 H(+). It participates in pyrimidine metabolism; CTP biosynthesis via de novo pathway; CTP from UDP: step 2/2. Allosterically activated by GTP, when glutamine is the substrate; GTP has no effect on the reaction when ammonia is the substrate. The allosteric effector GTP functions by stabilizing the protein conformation that binds the tetrahedral intermediate(s) formed during glutamine hydrolysis. Inhibited by the product CTP, via allosteric rather than competitive inhibition. Catalyzes the ATP-dependent amination of UTP to CTP with either L-glutamine or ammonia as the source of nitrogen. Regulates intracellular CTP levels through interactions with the four ribonucleotide triphosphates. This is CTP synthase from Sinorhizobium medicae (strain WSM419) (Ensifer medicae).